We begin with the raw amino-acid sequence, 341 residues long: Coiled-coil domain-containing protein 86 (341 aa).

Residues Met1–Val341 are disordered. Ser18 bears the Phosphoserine mark. Over residues Glu26 to Ser49 the composition is skewed to basic and acidic residues. Position 59 is a phosphoserine (Ser59). Positions Pro64–Pro73 are enriched in low complexity. A Phosphothreonine modification is found at Thr66. 7 positions are modified to phosphoserine: Ser67, Ser70, Ser81, Ser92, Ser103, Ser114, and Ser124. The segment covering Ala105 to Ser114 has biased composition (polar residues). Positions Glu130–Ile139 are enriched in basic and acidic residues. A phosphoserine mark is found at Ser142, Ser169, Ser170, and Ser200. Positions Gly219–Phe235 are enriched in basic residues. Residues Glu254–Glu298 are compositionally biased toward basic and acidic residues. The stretch at Ala261–Arg304 forms a coiled coil. A compositionally biased stretch (basic residues) spans Ala307–Leu317. Arg323 is modified (citrulline).

Post-translationally, citrullinated by PADI4.

It is found in the nucleus. It localises to the chromosome. Its subcellular location is the nucleolus. Required for proper chromosome segregation during mitosis and error-free mitotic progression. The protein is Coiled-coil domain-containing protein 86 of Rattus norvegicus (Rat).